We begin with the raw amino-acid sequence, 349 residues long: KH domain-containing, RNA-binding, signal transduction-associated protein 2 (349 aa).

Positions 65–135 constitute a KH domain; the sequence is LIPVKQYPKF…HLSDELHVLI (71 aa). 2 disordered regions span residues 181 to 263 and 321 to 349; these read SEES…PPPA and EWAT…YGRY. Residues 218-231 show a composition bias toward low complexity; the sequence is RGVLTPRGTTVTRG. Omega-N-methylarginine occurs at positions 230 and 240. Basic and acidic residues predominate over residues 340–349; it reads GYREHPYGRY.

The protein belongs to the KHDRBS family. Self-associates to form homooligomers. Interacts with KHDRBS1/SAM68; heterooligomer formation of KHDRBS family proteins may modulate RNA substrate specificity. Interacts with RBMX, SAFB, SFRS9 and YTHDC1. Interacts with FYN and PLCG1 (via SH3 domain). Interacts (phosphorylated) with FYN, GRB2, PLCG1 and RASA1 (via SH2 domain). Post-translationally, methylated. In terms of processing, tyrosine phosphorylated by FYN, PTK6 and SRC. Tyrosine phosphorylated by SRC during mitosis. In terms of tissue distribution, expressed in heart, skin, brain, colon, spleen, kidney, cervix and testis. In adult cerebellum expressed predominantly in Purkinje cells and in the hippocampus is abundantly expressed in glutamatergic dentate granule cells and in specific inhibitory Schaffer collateral-associated and path-associated interneurons; expression is restricted to neuronal subpopulations largely non-overlapping with expression of KHDRBS3/SLM-2 (at protein level).

It localises to the nucleus. RNA-binding protein that plays a role in the regulation of alternative splicing and influences mRNA splice site selection and exon inclusion. Binds both poly(A) and poly(U) homopolymers. Phosphorylation by PTK6 inhibits its RNA-binding ability. Induces an increased concentration-dependent incorporation of exon in CD44 pre-mRNA by direct binding to purine-rich exonic enhancer. Can regulate alternative splicing of neurexins NRXN1-3 in the laminin G-like domain 6 containing the evolutionary conserved neurexin alternative spliced segment 4 (AS4) involved in neurexin selective targeting to postsynaptic partners. Regulates cell-type specific alternative splicing of NRXN1 at AS4 and acts synergystically with SAM68 in exon skipping. In contrast acts antagonistically with SAM68 in NRXN3 exon skipping at AS4. Its phosphorylation by FYN inhibits its ability to regulate splice site selection. May function as an adapter protein for Src kinases during mitosis. This Mus musculus (Mouse) protein is KH domain-containing, RNA-binding, signal transduction-associated protein 2 (Khdrbs2).